The chain runs to 253 residues: Blue-light photoreceptor (253 aa).

In terms of domain architecture, PAS spans 6–79; the sequence is QFDVILKALN…AKIRHAINEK (74 aa). Cys-56 bears the S-4a-FMN cysteine mark. The PAC domain maps to 80–133; sequence STANVLLKNYRKDGTSFMNELTIEPIYDDHEHLYFVGIQKDVTTEHDYQLELEK. In terms of domain architecture, STAS spans 142-253; the sequence is STPIVPIKEN…STIKEALQFY (112 aa).

FMN binds covalently to cysteine after exposure to blue light and this bond is spontaneously broken in the dark.

Its function is as follows. Exhibits the same spectroscopical features and blue-light induced photochemistry as plants phototropins, with the reversible formation of a blue-shifted photoproduct, assigned to an FMN-cysteine thiol adduct. Positive regulator in the activation of the general stress transcription factor sigma-B. This is Blue-light photoreceptor from Listeria monocytogenes serovar 1/2a (strain ATCC BAA-679 / EGD-e).